The sequence spans 184 residues: uncharacterized protein (184 aa).

The interval 130 to 149 (DKDDDKKKKKKDDKKDDPCN) is disordered.

The protein localises to the virion. This is an uncharacterized protein from Acanthamoeba polyphaga (Amoeba).